Here is a 73-residue protein sequence, read N- to C-terminus: MKEGIHPKYNEITVKCLCGNSFESRSTKAEISTEVCSQCHPFYTGKQKLMDTAGRVERFRKRYNIAAAPTEES.

Residues Cys16, Cys18, Cys36, and Cys39 each contribute to the Zn(2+) site.

It belongs to the bacterial ribosomal protein bL31 family. Type A subfamily. Part of the 50S ribosomal subunit. Zn(2+) is required as a cofactor.

Binds the 23S rRNA. The polypeptide is Large ribosomal subunit protein bL31 (Citrifermentans bemidjiense (strain ATCC BAA-1014 / DSM 16622 / JCM 12645 / Bem) (Geobacter bemidjiensis)).